The chain runs to 98 residues: Integration host factor subunit beta (98 aa).

The protein belongs to the bacterial histone-like protein family. In terms of assembly, heterodimer of an alpha and a beta chain.

Functionally, this protein is one of the two subunits of integration host factor, a specific DNA-binding protein that functions in genetic recombination as well as in transcriptional and translational control. In Hahella chejuensis (strain KCTC 2396), this protein is Integration host factor subunit beta.